The chain runs to 849 residues: Serrate RNA effector molecule homolog A (849 aa).

2 disordered regions span residues methionine 1 to aspartate 90 and lysine 276 to leucine 409. 3 stretches are compositionally biased toward basic and acidic residues: residues tyrosine 8–leucine 73, lysine 276–asparagine 306, and glutamate 314–lysine 342. Positions serine 354–threonine 364 are enriched in acidic residues. The span at arginine 381–lysine 405 shows a compositional bias: basic and acidic residues.

It belongs to the ARS2 family. In terms of assembly, interacts ncbp1/cbp80.

The protein resides in the nucleus. It localises to the nucleoplasm. Its subcellular location is the cytoplasm. Its function is as follows. Acts as a mediator between the cap-binding complex (CBC) and the primary microRNAs (miRNAs) processing machinery during cell proliferation. Contributes to the stability and delivery of capped primary miRNA transcripts to the primary miRNA processing complex, thereby playing a role in RNA-mediated gene silencing (RNAi) by miRNAs. The polypeptide is Serrate RNA effector molecule homolog A (srrt-a) (Xenopus laevis (African clawed frog)).